The sequence spans 319 residues: tRNA uridine(34) hydroxylase (319 aa).

In terms of domain architecture, Rhodanese spans 127–221; it reads KQEDTVIIDA…YGKDPEVQGE (95 aa). The active-site Cysteine persulfide intermediate is the Cys181.

Belongs to the TrhO family.

It carries out the reaction uridine(34) in tRNA + AH2 + O2 = 5-hydroxyuridine(34) in tRNA + A + H2O. Catalyzes oxygen-dependent 5-hydroxyuridine (ho5U) modification at position 34 in tRNAs. The chain is tRNA uridine(34) hydroxylase from Bacillus cereus (strain B4264).